Consider the following 218-residue polypeptide: Glutathione S-transferase Mu 5 (218 aa).

Residues 2-88 (PMTLGYWDIR…YIARKHNLCG (87 aa)) enclose the GST N-terminal domain. Glutathione-binding positions include 7-8 (YW), 46-50 (WLNEK), 59-60 (NL), and 72-73 (QS). One can recognise a GST C-terminal domain in the interval 90–207 (TEEEKIRVDI…MKSSQFLRGL (118 aa)). Tyrosine 116 contacts substrate.

This sequence belongs to the GST superfamily. Mu family. In terms of assembly, homodimer.

Its subcellular location is the cytoplasm. It carries out the reaction RX + glutathione = an S-substituted glutathione + a halide anion + H(+). In terms of biological role, conjugation of reduced glutathione to a wide number of exogenous and endogenous hydrophobic electrophiles. This Homo sapiens (Human) protein is Glutathione S-transferase Mu 5 (GSTM5).